The primary structure comprises 142 residues: Large ribosomal subunit protein uL11 (142 aa).

Belongs to the universal ribosomal protein uL11 family. Part of the ribosomal stalk of the 50S ribosomal subunit. Interacts with L10 and the large rRNA to form the base of the stalk. L10 forms an elongated spine to which L12 dimers bind in a sequential fashion forming a multimeric L10(L12)X complex. In terms of processing, one or more lysine residues are methylated.

Forms part of the ribosomal stalk which helps the ribosome interact with GTP-bound translation factors. This Cronobacter sakazakii (strain ATCC BAA-894) (Enterobacter sakazakii) protein is Large ribosomal subunit protein uL11.